The sequence spans 235 residues: Large ribosomal subunit protein uL1 (235 aa).

Belongs to the universal ribosomal protein uL1 family. As to quaternary structure, part of the 50S ribosomal subunit.

In terms of biological role, binds directly to 23S rRNA. The L1 stalk is quite mobile in the ribosome, and is involved in E site tRNA release. Its function is as follows. Protein L1 is also a translational repressor protein, it controls the translation of the L11 operon by binding to its mRNA. The polypeptide is Large ribosomal subunit protein uL1 (Methylobacterium sp. (strain 4-46)).